The primary structure comprises 632 residues: 1-deoxy-D-xylulose-5-phosphate synthase (632 aa).

Residues His87 and 128-130 (GHS) contribute to the thiamine diphosphate site. Asp159 is a binding site for Mg(2+). Thiamine diphosphate is bound by residues 160–161 (GA), Asn188, Phe295, and Glu377. Mg(2+) is bound at residue Asn188.

This sequence belongs to the transketolase family. DXPS subfamily. Homodimer. Mg(2+) is required as a cofactor. It depends on thiamine diphosphate as a cofactor.

It carries out the reaction D-glyceraldehyde 3-phosphate + pyruvate + H(+) = 1-deoxy-D-xylulose 5-phosphate + CO2. It functions in the pathway metabolic intermediate biosynthesis; 1-deoxy-D-xylulose 5-phosphate biosynthesis; 1-deoxy-D-xylulose 5-phosphate from D-glyceraldehyde 3-phosphate and pyruvate: step 1/1. In terms of biological role, catalyzes the acyloin condensation reaction between C atoms 2 and 3 of pyruvate and glyceraldehyde 3-phosphate to yield 1-deoxy-D-xylulose-5-phosphate (DXP). The chain is 1-deoxy-D-xylulose-5-phosphate synthase from Stutzerimonas stutzeri (strain A1501) (Pseudomonas stutzeri).